We begin with the raw amino-acid sequence, 405 residues long: Mitochondrial outer membrane protein SLC25A46 (405 aa).

The tract at residues 1-77 is disordered; it reads MTSRRPDSFE…PDEAQSAAPP (77 aa). Low complexity predominate over residues 22–37; it reads FSGGYSGRSFNNSSSS. Residues 80–171 form a Solcar 1 repeat; that stretch reads QLNRFAGFGI…GIISECTPLP (92 aa). Transmembrane regions (helical) follow at residues 87 to 107, 151 to 171, 183 to 203, 242 to 262, 302 to 322, and 371 to 391; these read FGIGLASLFTENVLAHPCIVF, FVVQGVTLGTEGIISECTPLP, VVGHLVLKGLTYVVAMPFYSA, LLPLWNLVLPTVLHGILHYII, FPELMASFAASLCADVLLFPL, and MGFYKGFGSIVVQYSLHATVL. The stretch at 299 to 401 is one Solcar 2 repeat; that stretch reads DAYFPELMAS…QITKMIYSTL (103 aa).

It belongs to the mitochondrial carrier (TC 2.A.29) family.

It is found in the mitochondrion outer membrane. Functionally, transmembrane protein of the mitochondrial outer membrane that controls mitochondrial organization. May regulate the biogenesis and dynamics of mitochondrial cristae, the inwards folds of the inner mitochondrial membrane. Could regulate mitochondrial lipid homeostasis and thereby mitochondrial fission. In Danio rerio (Zebrafish), this protein is Mitochondrial outer membrane protein SLC25A46 (slc25a46).